The chain runs to 268 residues: tRNA (guanine-N(7)-)-methyltransferase (268 aa).

Positions 1–21 are disordered; that stretch reads MMAGAEAPQPQKRYYRQRAHS. The residue at position 21 (S21) is a Phosphoserine. 6 residues coordinate S-adenosyl-L-methionine: G78, E101, R103, N134, A135, and L154. D157 is a catalytic residue. The segment at 158–166 is alphaC helix; sequence PHFKRTKHK. 2 residues coordinate S-adenosyl-L-methionine: T232 and E234. The segment at 232 to 240 is alpha6 helix; sequence TEEGKKVLR.

The protein belongs to the class I-like SAM-binding methyltransferase superfamily. TrmB family. As to quaternary structure, catalytic component of the METTL1-WDR4 complex, composed of METTL1 and WDR4. Post-translationally, phosphorylation at Ser-21 by PKB/AKT1 inactivates its methyltransferase activity via a steric interference mechanism in the active site that locally disrupts the catalytic center. Phosphorylation at Ser-21 does not affect the interaction with WDR4.

The protein resides in the nucleus. It catalyses the reaction guanosine(46) in tRNA + S-adenosyl-L-methionine = N(7)-methylguanosine(46) in tRNA + S-adenosyl-L-homocysteine. The enzyme catalyses a guanosine in mRNA + S-adenosyl-L-methionine = an N(7)-methylguanosine in mRNA + S-adenosyl-L-homocysteine. It carries out the reaction a guanosine in miRNA + S-adenosyl-L-methionine = an N(7)-methylguanosine in miRNA + S-adenosyl-L-homocysteine. Its pathway is tRNA modification; N(7)-methylguanine-tRNA biosynthesis. In terms of biological role, catalytic component of METTL1-WDR4 methyltransferase complex that mediates the formation of N(7)-methylguanine in a subset of RNA species, such as tRNAs, mRNAs and microRNAs (miRNAs). Catalyzes the formation of N(7)-methylguanine at position 46 (m7G46) in a large subset of tRNAs that contain the 5'-RAGGU-3' motif within the variable loop. M7G46 interacts with C13-G22 in the D-loop to stabilize tRNA tertiary structure and protect tRNAs from decay. Also acts as a methyltransferase for a subset of internal N(7)-methylguanine in mRNAs. Internal N(7)-methylguanine methylation of mRNAs in response to stress promotes their relocalization to stress granules, thereby suppressing their translation. Also methylates a specific subset of miRNAs, such as let-7. N(7)-methylguanine methylation of let-7 miRNA promotes let-7 miRNA processing by disrupting an inhibitory secondary structure within the primary miRNA transcript (pri-miRNA). Acts as a regulator of embryonic stem cell self-renewal and differentiation. The protein is tRNA (guanine-N(7)-)-methyltransferase of Mus musculus (Mouse).